Reading from the N-terminus, the 142-residue chain is Large ribosomal subunit protein uL22c (142 aa).

It belongs to the universal ribosomal protein uL22 family. Part of the 50S ribosomal subunit.

The protein resides in the plastid. Its subcellular location is the chloroplast. Its function is as follows. This protein binds specifically to 23S rRNA. Functionally, the globular domain of the protein is located near the polypeptide exit tunnel on the outside of the subunit, while an extended beta-hairpin is found that lines the wall of the exit tunnel in the center of the 70S ribosome. This chain is Large ribosomal subunit protein uL22c (rpl22), found in Carica papaya (Papaya).